Consider the following 275-residue polypeptide: Dermonecrotic toxin LarSicTox-alphaIII1 (275 aa).

The active site involves His5. Mg(2+) is bound by residues Glu25 and Asp27. His41 (nucleophile) is an active-site residue. 2 disulfide bridges follow: Cys45-Cys51 and Cys47-Cys190. Residue Asp85 coordinates Mg(2+). Asn252 carries an N-linked (GlcNAc...) asparagine glycan.

It belongs to the arthropod phospholipase D family. Class II subfamily. Requires Mg(2+) as cofactor. In terms of tissue distribution, expressed by the venom gland.

The protein localises to the secreted. It catalyses the reaction an N-(acyl)-sphingosylphosphocholine = an N-(acyl)-sphingosyl-1,3-cyclic phosphate + choline. The enzyme catalyses an N-(acyl)-sphingosylphosphoethanolamine = an N-(acyl)-sphingosyl-1,3-cyclic phosphate + ethanolamine. The catalysed reaction is a 1-acyl-sn-glycero-3-phosphocholine = a 1-acyl-sn-glycero-2,3-cyclic phosphate + choline. It carries out the reaction a 1-acyl-sn-glycero-3-phosphoethanolamine = a 1-acyl-sn-glycero-2,3-cyclic phosphate + ethanolamine. Its function is as follows. Dermonecrotic toxins cleave the phosphodiester linkage between the phosphate and headgroup of certain phospholipids (sphingolipid and lysolipid substrates), forming an alcohol (often choline) and a cyclic phosphate. This toxin acts on sphingomyelin (SM). It may also act on ceramide phosphoethanolamine (CPE), lysophosphatidylcholine (LPC) and lysophosphatidylethanolamine (LPE), but not on lysophosphatidylserine (LPS), and lysophosphatidylglycerol (LPG). It acts by transphosphatidylation, releasing exclusively cyclic phosphate products as second products. Induces dermonecrosis, hemolysis, increased vascular permeability, edema, inflammatory response, and platelet aggregation. This chain is Dermonecrotic toxin LarSicTox-alphaIII1, found in Loxosceles arizonica (Arizona brown spider).